A 102-amino-acid polypeptide reads, in one-letter code: uncharacterized protein (102 aa).

The tract at residues 1-41 is disordered; sequence MAAPRQIAFYGKGGTGKPKRKPEPVTASKEDRCLGSPSKNK.

This sequence to the N-terminal of nitrogenase iron protein (NifH). Has lost the ATP-binding site.

Its function is as follows. This protein is either not expressed, expressed at low levels or rapidly degraded. This is an uncharacterized protein from Rhizobium meliloti (Ensifer meliloti).